We begin with the raw amino-acid sequence, 316 residues long: Retinol dehydrogenase 12 (316 aa).

46–52 lines the NADP(+) pocket; that stretch reads GANTGIG. Ser-175 serves as a coordination point for substrate. Tyr-200 functions as the Proton acceptor in the catalytic mechanism.

This sequence belongs to the short-chain dehydrogenases/reductases (SDR) family. In terms of tissue distribution, widely expressed, mostly in retina, kidney, brain, skeletal muscle, pancreas and stomach.

The protein resides in the endoplasmic reticulum membrane. It carries out the reaction all-trans-retinol + NADP(+) = all-trans-retinal + NADPH + H(+). It catalyses the reaction 11-cis-retinol + NADP(+) = 11-cis-retinal + NADPH + H(+). The enzyme catalyses 9-cis-retinol + NADP(+) = 9-cis-retinal + NADPH + H(+). The catalysed reaction is a 4-hydroxynonen-1-ol + NADP(+) = a 4-hydroxynonenal + NADPH + H(+). It carries out the reaction (E)-non-2-en-1-ol + NADP(+) = (E)-non-2-enal + NADPH + H(+). It catalyses the reaction (Z)-non-6-en-1-ol + NADP(+) = (Z)-non-6-enal + NADPH + H(+). The enzyme catalyses nonan-1-ol + NADP(+) = nonanal + NADPH + H(+). It participates in cofactor metabolism; retinol metabolism. Retinoids dehydrogenase/reductase with a clear preference for NADP. Displays high activity towards 9-cis, 11-cis and all-trans-retinal. Shows very weak activity towards 13-cis-retinol. Also exhibits activity, albeit with lower affinity than for retinaldehydes, towards lipid peroxidation products (C9 aldehydes) such as 4-hydroxynonenal and trans-2-nonenal. May play an important function in photoreceptor cells to detoxify 4-hydroxynonenal and potentially other toxic aldehyde products resulting from lipid peroxidation. Has no dehydrogenase activity towards steroids. This is Retinol dehydrogenase 12 (RDH12) from Homo sapiens (Human).